Here is a 257-residue protein sequence, read N- to C-terminus: Hydroxyacylglutathione hydrolase (257 aa).

Histidine 55, histidine 57, aspartate 59, histidine 60, histidine 112, aspartate 129, and histidine 167 together coordinate Zn(2+).

The protein belongs to the metallo-beta-lactamase superfamily. Glyoxalase II family. As to quaternary structure, monomer. The cofactor is Zn(2+).

It carries out the reaction an S-(2-hydroxyacyl)glutathione + H2O = a 2-hydroxy carboxylate + glutathione + H(+). The protein operates within secondary metabolite metabolism; methylglyoxal degradation; (R)-lactate from methylglyoxal: step 2/2. Functionally, thiolesterase that catalyzes the hydrolysis of S-D-lactoyl-glutathione to form glutathione and D-lactic acid. The chain is Hydroxyacylglutathione hydrolase from Pseudoalteromonas translucida (strain TAC 125).